A 704-amino-acid polypeptide reads, in one-letter code: D-(-)-3-hydroxybutyrate oligomer hydrolase (704 aa).

An N-terminal signal peptide occupies residues 1 to 31; the sequence is MTTTNRNNLKLTALTAAVLTLSACGGSDAVA. Residue S309 is the Charge relay system of the active site.

The protein belongs to the D-(-)-3-hydroxybutyrate oligomer hydrolase family.

Its subcellular location is the secreted. It catalyses the reaction (3R)-hydroxybutanoate dimer + H2O = 2 (R)-3-hydroxybutanoate + H(+). It functions in the pathway lipid metabolism; butanoate metabolism. In terms of biological role, participates in the degradation of poly-3-hydroxybutyrate (PHB). It works downstream of poly(3-hydroxybutyrate) depolymerase, hydrolyzing D(-)-3-hydroxybutyrate oligomers of various length (3HB-oligomers) into 3HB-monomers. This is D-(-)-3-hydroxybutyrate oligomer hydrolase from Albidiferax ferrireducens (strain ATCC BAA-621 / DSM 15236 / T118) (Rhodoferax ferrireducens).